The primary structure comprises 131 residues: Small ribosomal subunit protein uS12c (131 aa).

It belongs to the universal ribosomal protein uS12 family. In terms of assembly, part of the 30S ribosomal subunit.

Its subcellular location is the plastid. It localises to the chloroplast. With S4 and S5 plays an important role in translational accuracy. Located at the interface of the 30S and 50S subunits. This chain is Small ribosomal subunit protein uS12c (rps12), found in Stigeoclonium helveticum (Green alga).